A 281-amino-acid polypeptide reads, in one-letter code: uncharacterized protein (281 aa).

This is an uncharacterized protein from Mycoplasma pneumoniae (strain ATCC 29342 / M129 / Subtype 1) (Mycoplasmoides pneumoniae).